Here is a 1385-residue protein sequence, read N- to C-terminus: Serine-aspartate repeat-containing protein D (1385 aa).

The first 35 residues, 1–35, serve as a signal peptide directing secretion; sequence MLNRENKTAITRKGMVSNRLNKFSIRKYTVGTASI. The YSIRK-G/S signaling motif signature appears at 23-34; it reads FSIRKYTVGTAS. A ligand binding A region region spans residues 36–568; the sequence is LVGTTLIFGL…NNQSGGAGQE (533 aa). Disordered regions lie at residues 54 to 162 and 200 to 224; these read ESTN…DLLE and ETLV…KSTA. Polar residues-rich tracts occupy residues 62–71 and 94–109; these read EATTSASDNQ and EMVS…NGNK. Positions 130 to 145 are enriched in basic and acidic residues; that stretch reads KSDEQASPKSTNEDLN. Positions 146 to 155 are enriched in polar residues; it reads TKQTISNQEG. Positions 205–214 are enriched in low complexity; sequence NNSNSNNENN. 5 CNA-B domains span residues 569–680, 681–791, 792–901, 902–1012, and 1013–1123; these read VYKI…IYKP, KYNL…YKTP, KYNL…FYKP, TYNL…YKTP, and KYSL…EEET. Disordered stretches follow at residues 856–886, 972–992, and 1077–1361; these read FETP…TGVI, YTPT…GLTT, and FEKP…SNNA. 2 stretches are compositionally biased toward polar residues: residues 860 to 869 and 972 to 981; these read SGYTPTQVGS and YTPTSVTSGN. Over residues 1081 to 1090 the composition is skewed to low complexity; sequence TGLTQTGTNT. Composition is skewed to acidic residues over residues 1091–1101 and 1118–1324; these read TEDDKDADGGE and YYEE…DSDS. Positions 1348–1352 match the LPXTG sorting signal motif; it reads LPETG. T1351 bears the Pentaglycyl murein peptidoglycan amidated threonine mark. The propeptide at 1352–1385 is removed by sortase; that stretch reads GNENSGSNNATLFGGLFAALGSLLLFGRRKKQNK.

It belongs to the serine-aspartate repeat-containing protein (SDr) family. In terms of assembly, interacts with host DSG1; this interaction increases S.aureus adherence to keratinocytes.

The protein resides in the secreted. It is found in the cell wall. Its function is as follows. Cell surface-associated calcium-binding protein which plays an important role in adhesion and pathogenesis. Mediates interactions with components of the extracellular matrix such as host DSG1 to promote bacterial adhesion to host cells. Contributes to the resistance to killing by innate immune components such as neutrophils present in blood and thus attenuates bacterial clearance. The protein is Serine-aspartate repeat-containing protein D (sdrD) of Staphylococcus aureus (strain Mu50 / ATCC 700699).